Reading from the N-terminus, the 197-residue chain is Putative RNA-binding protein EEED8.12 (197 aa).

Residues 61–138 (KSVFIGNVDF…RPIVVTAKRT (78 aa)) form the RRM domain. Positions 142-166 (GMGHGVRGSSRGTFGRGRGAARGAP) are disordered.

This Caenorhabditis elegans protein is Putative RNA-binding protein EEED8.12.